The chain runs to 706 residues: Glycogen [starch] synthase (706 aa).

Arg-26 contacts UDP. 2 residues coordinate UDP-alpha-D-glucose: His-191 and Arg-197. Alpha-D-glucose 6-phosphate-binding residues include His-277, Glu-278, Gln-280, His-283, and Lys-287. Arg-317 provides a ligand contact to UDP. Residue Arg-317 participates in UDP-alpha-D-glucose binding. His-491 contributes to the alpha-D-glucose 6-phosphate binding site. UDP-alpha-D-glucose-binding residues include Glu-500, Trp-502, and Gly-503. Thr-505 is a binding site for UDP. Positions 572 and 576 each coordinate alpha-D-glucose 6-phosphate. The disordered stretch occupies residues 670–706 (PEEEDPEEYPFPLTLKQRTGPGSPLDSIQGLQLNGTR).

It belongs to the glycosyltransferase 3 family. As to quaternary structure, interacts with glucogenin gnn; the interaction is direct.

It carries out the reaction [(1-&gt;4)-alpha-D-glucosyl](n) + UDP-alpha-D-glucose = [(1-&gt;4)-alpha-D-glucosyl](n+1) + UDP + H(+). Its pathway is glycan biosynthesis; glycogen biosynthesis. Allosteric activation by glucose-6-phosphate, and phosphorylation by a cAMP-dependent kinase. Functionally, glycogen synthase participates in the glycogen biosynthetic process along with glycogenin and glycogen branching enzyme. Extends the primer composed of a few glucose units formed by glycogenin by adding new glucose units to it. In this context, glycogen synthase transfers the glycosyl residue from UDP-Glc to the non-reducing end of alpha-1,4-glucan. The chain is Glycogen [starch] synthase (gsy-1) from Neurospora crassa (strain ATCC 24698 / 74-OR23-1A / CBS 708.71 / DSM 1257 / FGSC 987).